A 69-amino-acid chain; its full sequence is MGRLLVLLVRFYQLFISPVLPPSCRHSPTCSQYAIEALQKHGAIKGSWLAFRRVLRCNPWHPGGYDPVP.

This sequence belongs to the UPF0161 family.

It is found in the cell inner membrane. Functionally, could be involved in insertion of integral membrane proteins into the membrane. The sequence is that of Putative membrane protein insertion efficiency factor from Magnetococcus marinus (strain ATCC BAA-1437 / JCM 17883 / MC-1).